The chain runs to 147 residues: Large ribosomal subunit protein uL15 (147 aa).

The interval 1–58 (MKLHELKPAQGSTKAPKRLGRGIGSGTGKTSGKGHKGQKARAGGGVRPGFEGGQQPLA) is disordered. Composition is skewed to gly residues over residues 21–31 (RGIGSGTGKTS) and 42–52 (AGGGVRPGFEG).

Belongs to the universal ribosomal protein uL15 family. In terms of assembly, part of the 50S ribosomal subunit.

Functionally, binds to the 23S rRNA. The polypeptide is Large ribosomal subunit protein uL15 (Desulfitobacterium hafniense (strain Y51)).